A 344-amino-acid chain; its full sequence is MFKSLAAVLPRASKAKFLQKNYASTLAFIESSKDGSVSRSSLSLLAAAQKLSNPITAVITGSKAEKTAEALKSSYSCSNLEKLVIFEDSKLDTCLPEQLTPLLVKLLKGGDYSHFVVSNSSVGKSVLPRVGALLDVQPVCEVTVIKDPKTFIRPIYAGNIISTIECQAEKKLLIIRASAFPPIAEGSMDSVTIEKRTDIPPCDLNVTWVKTILTKSERPELTSAQNVVTGGRALKDKETFEKLLSPLADVLHAAIGATRASVDNGLCDNSLQIGQTGKVVAPNLYIAIGVSGAVQHLAGMKDSKVIVAINNDPDAPIFNVADYGLQGDLYKIVPELTEKLGKYK.

284–312 (LYIAIGVSGAVQHLAGMKDSKVIVAINND) provides a ligand contact to FAD.

Belongs to the ETF alpha-subunit/FixB family. Heterodimer of an alpha and a beta subunit. It depends on FAD as a cofactor.

It is found in the mitochondrion matrix. Functionally, the electron transfer flavoprotein serves as a specific electron acceptor for several dehydrogenases, including five acyl-CoA dehydrogenases, glutaryl-CoA and sarcosine dehydrogenase. It transfers the electrons to the main mitochondrial respiratory chain via ETF-ubiquinone oxidoreductase (ETF dehydrogenase). The protein is Probable electron transfer flavoprotein subunit alpha, mitochondrial (AIM45) of Saccharomyces cerevisiae (strain ATCC 204508 / S288c) (Baker's yeast).